Reading from the N-terminus, the 472-residue chain is MTDKPKQYVKEMFFRPQHLHFTGIGGIGMSGIAEVLLNLGYQISGSDVKLSPITERLAAMGARVFEGHAASNIAGARALVVSSAVDEQNPEVQEARRISIPVIPRGELLAELMRLKYGIAVAGSHGKTTTTSMAATILNYAGLDPTVVVGGRVGTMGGSNARVGHSDFLVVESDESDGSFLKLAPIIAVVTNVDREHLDHYPDLDAIRAAFLEFVNKVPFYGAVIVCLDDANVQGLLPEIRRRTITYGTTAQADMEAGDISCGPFASEFRLRYRTADLGRFRLHIPGRHNVLNAMAAIAVAMELEVKPDTIREALETFSGVDRRFQLRGQERGIAVVDDYGHHPTEIRATLDGARQCGFRRIHVLFQPHRYTRTFHLMDEFARSFHQADSLFVMDIYAASEKPIPGVTAESLVERIRQFGHRGVEYVGTLDRGVDALVAAASEGDLVLTLGAGSVYQAGEKVLERLRTEGKG.

123–129 (GSHGKTT) contributes to the ATP binding site.

This sequence belongs to the MurCDEF family.

The protein resides in the cytoplasm. It carries out the reaction UDP-N-acetyl-alpha-D-muramate + L-alanine + ATP = UDP-N-acetyl-alpha-D-muramoyl-L-alanine + ADP + phosphate + H(+). It participates in cell wall biogenesis; peptidoglycan biosynthesis. Functionally, cell wall formation. This Solibacter usitatus (strain Ellin6076) protein is UDP-N-acetylmuramate--L-alanine ligase.